A 62-amino-acid chain; its full sequence is MARVCAITGRKARSGNSRSHAMNATKRKWGANLQKVRVRINGKVQRVYVSARALKSGKIERV.

A disordered region spans residues 1–28; sequence MARVCAITGRKARSGNSRSHAMNATKRK.

The protein belongs to the bacterial ribosomal protein bL28 family.

The chain is Large ribosomal subunit protein bL28 from Bacillus cytotoxicus (strain DSM 22905 / CIP 110041 / 391-98 / NVH 391-98).